A 320-amino-acid chain; its full sequence is Protein rlx (320 aa).

Functionally, this protein is probably required for relaxation complex formation and plasmid mobilization by conjugative plasmids. This Staphylococcus aureus protein is Protein rlx (rlx).